The primary structure comprises 209 residues: MAKVHVFDHPLIQHKLSYIREESTGTKEFRELVDEVGMLMAYEVTRDLELDDVQIKTPVTEMTAKRLSGKKIAVVPILRAGLGMTEGVLKMIPAARVGHIGLYRDPETLQPVEYFAKMPQDIEERDFIVVDPMLATGGSAIEAINSLKKRGAVKIRFMCLVAAPEGVEALQKAHPDVDIYIAGLDEKLNDHGYIVPGLGDAGDRLFGTK.

5-phospho-alpha-D-ribose 1-diphosphate contacts are provided by residues R79, R104, and 131–139 (DPMLATGGS). Uracil contacts are provided by residues I194 and 199 to 201 (GDA). Residue D200 coordinates 5-phospho-alpha-D-ribose 1-diphosphate.

Belongs to the UPRTase family. The cofactor is Mg(2+).

The enzyme catalyses UMP + diphosphate = 5-phospho-alpha-D-ribose 1-diphosphate + uracil. Its pathway is pyrimidine metabolism; UMP biosynthesis via salvage pathway; UMP from uracil: step 1/1. With respect to regulation, allosterically activated by GTP. In terms of biological role, catalyzes the conversion of uracil and 5-phospho-alpha-D-ribose 1-diphosphate (PRPP) to UMP and diphosphate. This Macrococcus caseolyticus (strain JCSC5402) (Macrococcoides caseolyticum) protein is Uracil phosphoribosyltransferase.